Here is a 534-residue protein sequence, read N- to C-terminus: Prolyl 4-hydroxylase subunit alpha-1 (534 aa).

A signal peptide spans 1-17 (MIWYILVVGILLPQSLA). Residue Asn113 is glycosylated (N-linked (GlcNAc...) asparagine). One copy of the TPR repeat lies at 205-238 (VSVLDYLSYAVYQQGDLDKALLLTKKLLELDPEH). The interval 258 to 277 (ANKSSSDDQSDQKTTLKKKG) is disordered. Asn259 carries N-linked (GlcNAc...) asparagine glycosylation. A Fe2OG dioxygenase domain is found at 411-519 (TAEELQVANY…KWVSNKWLHE (109 aa)). Residues His429, Asp431, and His500 each coordinate Fe cation. Lys510 lines the 2-oxoglutarate pocket.

The protein belongs to the P4HA family. As to quaternary structure, heterotetramer of two alpha-1 chains and two beta chains (P4HB)(the beta chain is the multi-functional PDI), where P4HB plays the role of a structural subunit; this tetramer catalyzes the formation of 4-hydroxyproline in collagen. Fe(2+) is required as a cofactor. The cofactor is L-ascorbate.

The protein resides in the endoplasmic reticulum lumen. It carries out the reaction L-prolyl-[collagen] + 2-oxoglutarate + O2 = trans-4-hydroxy-L-prolyl-[collagen] + succinate + CO2. Catalyzes the post-translational formation of 4-hydroxyproline in -Xaa-Pro-Gly- sequences in collagens and other proteins. In Bos taurus (Bovine), this protein is Prolyl 4-hydroxylase subunit alpha-1 (P4HA1).